The sequence spans 433 residues: Keratin, type I cytoskeletal 17 (433 aa).

Residues 1-24 (MTTTIRQFTSSSSIKGSSGLGGGS) are disordered. The tract at residues 1 to 83 (MTTTIRQFTS…GGVDGLLAGG (83 aa)) is head. Ser-12 and Ser-13 each carry phosphoserine. Lys-15 is covalently cross-linked (Glycyl lysine isopeptide (Lys-Gly) (interchain with G-Cter in SUMO1); alternate). A Glycyl lysine isopeptide (Lys-Gly) (interchain with G-Cter in SUMO2); alternate cross-link involves residue Lys-15. 4 positions are modified to phosphoserine: Ser-25, Ser-32, Ser-34, and Ser-39. At Ser-44 the chain carries Phosphoserine; by RPS6KA1. The interval 84–120 (EKATMQNLNDRLASYLDKVRALEEANTELEVKIRDWY) is coil 1A. The 312-residue stretch at 84-395 (EKATMQNLND…RLLEGEDAHL (312 aa)) folds into the IF rod domain. Thr-110 is subject to Phosphothreonine. Positions 121-138 (QKQAPGPARDYSAYYHTI) are linker 1. A coil 1B region spans residues 139 to 230 (EDLKNKILVA…NHEEEMNALR (92 aa)). The tract at residues 231 to 250 (GQVGGEINVEMDAAPGVDLS) is linker 12. A coil 2 region spans residues 251-392 (RILSEMRDQY…TYRRLLEGED (142 aa)). A Glycyl lysine isopeptide (Lys-Gly) (interchain with G-Cter in SUMO2) cross-link involves residue Lys-278. Residue Thr-279 is modified to Phosphothreonine. Ser-323 bears the Phosphoserine mark. The interval 393–433 (AHLTQYKPKEPVTTRQVRTIVEEVQDGKVISSREQVHQTTR) is tail. Residues Lys-399, Lys-401, and Lys-420 each participate in a glycyl lysine isopeptide (Lys-Gly) (interchain with G-Cter in SUMO1); alternate cross-link. Residues Lys-399, Lys-401, and Lys-420 each participate in a glycyl lysine isopeptide (Lys-Gly) (interchain with G-Cter in SUMO2); alternate cross-link.

This sequence belongs to the intermediate filament family. As to quaternary structure, heterodimer of a type I and a type II keratin. KRT17 associates with KRT6 isomers (KRT6A or KRT6B). Interacts with TRADD and SFN. Phosphorylation at Ser-44 occurs in a growth- and stress-dependent fashion in skin keratinocytes, it has no effect on filament organization. In terms of tissue distribution, expressed strongly in outer root sheath and medulla region of hair follicle and in the early differentiating epithelial cells (trichocytes) within the hair bulb region. Weak expression in the matrix cells of hair bulb. Also present in the sweat gland within the skin, vibrissae follicle, salivary gland, tooth and thymus.

Its subcellular location is the cytoplasm. Its function is as follows. Type I keratin involved in the formation and maintenance of various skin appendages, specifically in determining shape and orientation of hair. Required for the correct growth of hair follicles, in particular for the persistence of the anagen (growth) state. Modulates the function of TNF-alpha in the specific context of hair cycling. Regulates protein synthesis and epithelial cell growth through binding to the adapter protein SFN and by stimulating Akt/mTOR pathway. Involved in tissue repair. May be a marker of basal cell differentiation in complex epithelia and therefore indicative of a certain type of epithelial 'stem cells'. Acts as a promoter of epithelial proliferation by acting a regulator of immune response in skin: promotes Th1/Th17-dominated immune environment contributing to the development of basaloid skin tumors. May act as an autoantigen in the immunopathogenesis of psoriasis, with certain peptide regions being a major target for autoreactive T-cells and hence causing their proliferation. This is Keratin, type I cytoskeletal 17 (Krt17) from Mus musculus (Mouse).